Reading from the N-terminus, the 453-residue chain is Chromosomal replication initiator protein DnaA (453 aa).

The segment at 1–71 (MSEKEIWEKV…QAILFDVVGY (71 aa)) is domain I, interacts with DnaA modulators. The segment at 71-114 (YEVKPHFITTEELANYSNNETATPKEATKPSTETTEDNHVLGRE) is domain II. Residues 115-331 (QFNAHNTFDT…GALTRLLAYS (217 aa)) are domain III, AAA+ region. Residues G159, G161, K162, and T163 each coordinate ATP. Residues 332–453 (QLLGKPITTE…ENLEKEIRNV (122 aa)) are domain IV, binds dsDNA.

This sequence belongs to the DnaA family. Oligomerizes as a right-handed, spiral filament on DNA at oriC.

The protein localises to the cytoplasm. Plays an essential role in the initiation and regulation of chromosomal replication. ATP-DnaA binds to the origin of replication (oriC) to initiate formation of the DNA replication initiation complex once per cell cycle. Binds the DnaA box (a 9 base pair repeat at the origin) and separates the double-stranded (ds)DNA. Forms a right-handed helical filament on oriC DNA; dsDNA binds to the exterior of the filament while single-stranded (ss)DNA is stabiized in the filament's interior. The ATP-DnaA-oriC complex binds and stabilizes one strand of the AT-rich DNA unwinding element (DUE), permitting loading of DNA polymerase. After initiation quickly degrades to an ADP-DnaA complex that is not apt for DNA replication. Binds acidic phospholipids. The polypeptide is Chromosomal replication initiator protein DnaA (Staphylococcus aureus (strain MRSA252)).